The primary structure comprises 143 residues: Large ribosomal subunit protein uL16 (143 aa).

Belongs to the universal ribosomal protein uL16 family. In terms of assembly, part of the 50S ribosomal subunit.

In terms of biological role, binds 23S rRNA and is also seen to make contacts with the A and possibly P site tRNAs. This chain is Large ribosomal subunit protein uL16, found in Caulobacter vibrioides (strain ATCC 19089 / CIP 103742 / CB 15) (Caulobacter crescentus).